A 389-amino-acid chain; its full sequence is 11-beta-hydroxysteroid dehydrogenase-like 5 (389 aa).

A helical; Signal-anchor for type II membrane protein membrane pass occupies residues 11–31; it reads LVAPPATMVVMAFAWPLLSFI. NADP(+)-binding positions include 56–82 and Asp-107; that span reads GASSAIGEQIAYEYAKRGANLVLVARR. Ser-186 serves as a coordination point for substrate. Tyr-199 acts as the Proton acceptor in catalysis. NADP(+)-binding positions include 199-203 and Lys-203; that span reads YSAAK. Residues 337 to 381 form a disordered region; that stretch reads LMLEGGPPRVPASPPRYTASPPHYTASPPRYPASPPRYPASPPRF. Pro residues predominate over residues 365-378; sequence PRYPASPPRYPASP.

The protein belongs to the short-chain dehydrogenases/reductases (SDR) family.

The protein localises to the membrane. This chain is 11-beta-hydroxysteroid dehydrogenase-like 5 (HSD5), found in Arabidopsis thaliana (Mouse-ear cress).